The primary structure comprises 432 residues: Anaerobic glycerol-3-phosphate dehydrogenase subunit B (432 aa).

This sequence belongs to the anaerobic G-3-P dehydrogenase subunit B family. Composed of a catalytic GlpA/B dimer and of membrane bound GlpC. It depends on FMN as a cofactor.

The enzyme catalyses a quinone + sn-glycerol 3-phosphate = dihydroxyacetone phosphate + a quinol. Its pathway is polyol metabolism; glycerol degradation via glycerol kinase pathway; glycerone phosphate from sn-glycerol 3-phosphate (anaerobic route): step 1/1. In terms of biological role, conversion of glycerol 3-phosphate to dihydroxyacetone. Uses fumarate or nitrate as electron acceptor. The protein is Anaerobic glycerol-3-phosphate dehydrogenase subunit B of Haemophilus influenzae (strain PittEE).